Here is a 128-residue protein sequence, read N- to C-terminus: uncharacterized protein (128 aa).

An S1 motif domain is found at 6–74; sequence GSKLQGKITG…KDGKIGLSIK (69 aa). Residues 72–128 form a disordered region; sequence SIKKAKDRPQARPRNDFRPKESFEQKMNKFLKDSEDRLSSLKRNTESKRGGRGARRG. A compositionally biased stretch (basic and acidic residues) spans 78-120; sequence DRPQARPRNDFRPKESFEQKMNKFLKDSEDRLSSLKRNTESKR.

This sequence belongs to the peptidase U57 family.

This is an uncharacterized protein from Bacillus subtilis (strain 168).